The following is a 132-amino-acid chain: Small ribosomal subunit protein uS8c (132 aa).

The protein belongs to the universal ribosomal protein uS8 family. Part of the 30S ribosomal subunit.

It is found in the plastid. The protein localises to the chloroplast. Functionally, one of the primary rRNA binding proteins, it binds directly to 16S rRNA central domain where it helps coordinate assembly of the platform of the 30S subunit. The sequence is that of Small ribosomal subunit protein uS8c (rps8) from Rhodomonas salina (Cryptomonas salina).